Consider the following 672-residue polypeptide: Threonine--tRNA ligase (672 aa).

Residues 1–64 (MTELLKISLP…EGDAELALIT (64 aa)) form the TGS domain. Positions 257 to 566 (DHRKLGREMD…LIEHFAGRLP (310 aa)) are catalytic. Zn(2+) contacts are provided by cysteine 362, histidine 413, and histidine 543.

The protein belongs to the class-II aminoacyl-tRNA synthetase family. As to quaternary structure, homodimer. The cofactor is Zn(2+).

It localises to the cytoplasm. The enzyme catalyses tRNA(Thr) + L-threonine + ATP = L-threonyl-tRNA(Thr) + AMP + diphosphate + H(+). In terms of biological role, catalyzes the attachment of threonine to tRNA(Thr) in a two-step reaction: L-threonine is first activated by ATP to form Thr-AMP and then transferred to the acceptor end of tRNA(Thr). Also edits incorrectly charged L-seryl-tRNA(Thr). In Erythrobacter litoralis (strain HTCC2594), this protein is Threonine--tRNA ligase.